Reading from the N-terminus, the 149-residue chain is D-aminoacyl-tRNA deacylase (149 aa).

The short motif at 137–138 is the Gly-cisPro motif, important for rejection of L-amino acids element; it reads GP.

It belongs to the DTD family. As to quaternary structure, homodimer.

The protein resides in the cytoplasm. It catalyses the reaction glycyl-tRNA(Ala) + H2O = tRNA(Ala) + glycine + H(+). It carries out the reaction a D-aminoacyl-tRNA + H2O = a tRNA + a D-alpha-amino acid + H(+). In terms of biological role, an aminoacyl-tRNA editing enzyme that deacylates mischarged D-aminoacyl-tRNAs. Also deacylates mischarged glycyl-tRNA(Ala), protecting cells against glycine mischarging by AlaRS. Acts via tRNA-based rather than protein-based catalysis; rejects L-amino acids rather than detecting D-amino acids in the active site. By recycling D-aminoacyl-tRNA to D-amino acids and free tRNA molecules, this enzyme counteracts the toxicity associated with the formation of D-aminoacyl-tRNA entities in vivo and helps enforce protein L-homochirality. The chain is D-aminoacyl-tRNA deacylase from Paracoccus denitrificans (strain Pd 1222).